Consider the following 215-residue polypeptide: MGKVYDWFEERLEIQAIADDITSKYVPPHVNIFYCLGGITLTCFLVQVATGFAMTFYYRPTVTEAFASVQYIMVEVNFGWLIRSIHRWSASMMVLMMILHVFRVYLTGGFKKPRELTWVTGVILAVLTVSFGVTGYSLPWDQIGYWAVKIVTGVPEAIPVIGSPLVELLRGSFSVGQSTLTRFYSLHTFILPFLTAVFMLMHFLMIRKQGISGPL.

The chain crosses the membrane as a helical span at residues 32 to 52; sequence IFYCLGGITLTCFLVQVATGF. Cys35 contacts heme c. Positions 86 and 100 each coordinate heme b. 3 helical membrane-spanning segments follow: residues 90-110, 116-136, and 186-206; these read ASMM…TGGF, LTWV…VTGY, and LHTF…FLMI. His187 and His202 together coordinate heme b.

This sequence belongs to the cytochrome b family. PetB subfamily. The 4 large subunits of the cytochrome b6-f complex are cytochrome b6, subunit IV (17 kDa polypeptide, PetD), cytochrome f and the Rieske protein, while the 4 small subunits are PetG, PetL, PetM and PetN. The complex functions as a dimer. Requires heme b as cofactor. Heme c serves as cofactor.

The protein resides in the plastid. It is found in the chloroplast thylakoid membrane. Its function is as follows. Component of the cytochrome b6-f complex, which mediates electron transfer between photosystem II (PSII) and photosystem I (PSI), cyclic electron flow around PSI, and state transitions. This is Cytochrome b6 from Welwitschia mirabilis (Tree tumbo).